A 308-amino-acid polypeptide reads, in one-letter code: Ornithine carbamoyltransferase (308 aa).

Carbamoyl phosphate contacts are provided by residues 56–59 (STRT), Q83, R107, and 134–137 (HPCQ). L-ornithine-binding positions include N165, D225, and 229 to 230 (SM). Carbamoyl phosphate contacts are provided by residues 266–267 (CL) and R294.

The protein belongs to the aspartate/ornithine carbamoyltransferase superfamily. OTCase family.

It localises to the cytoplasm. It catalyses the reaction carbamoyl phosphate + L-ornithine = L-citrulline + phosphate + H(+). Its pathway is amino-acid degradation; L-arginine degradation via ADI pathway; carbamoyl phosphate from L-arginine: step 2/2. In terms of biological role, reversibly catalyzes the transfer of the carbamoyl group from carbamoyl phosphate (CP) to the N(epsilon) atom of ornithine (ORN) to produce L-citrulline. In Cereibacter sphaeroides (strain KD131 / KCTC 12085) (Rhodobacter sphaeroides), this protein is Ornithine carbamoyltransferase.